The sequence spans 165 residues: Large ribosomal subunit protein uL10 (165 aa).

This sequence belongs to the universal ribosomal protein uL10 family. Part of the ribosomal stalk of the 50S ribosomal subunit. The N-terminus interacts with L11 and the large rRNA to form the base of the stalk. The C-terminus forms an elongated spine to which L12 dimers bind in a sequential fashion forming a multimeric L10(L12)X complex.

Functionally, forms part of the ribosomal stalk, playing a central role in the interaction of the ribosome with GTP-bound translation factors. In Mycoplasma mycoides subsp. mycoides SC (strain CCUG 32753 / NCTC 10114 / PG1), this protein is Large ribosomal subunit protein uL10.